We begin with the raw amino-acid sequence, 551 residues long: Sodium-dependent high-affinity dicarboxylate transporter 2 (551 aa).

10 helical membrane-spanning segments follow: residues 9-29, 34-54, 82-102, 119-139, 194-214, 243-263, 347-367, 417-437, 449-469, and 497-517; these read LIKK…LFFG, CLFS…PIGV, SIVL…TGLH, VMLL…SDTA, FCKA…TAII, WMVF…IILV, VSGV…FDPI, IFVG…IVIM, IFIP…LYLA, and VISM…CILI.

It belongs to the SLC13A/DASS transporter (TC 2.A.47) family. NADC subfamily.

It is found in the membrane. Its function is as follows. High-affinity sodium-dicarboxylate cotransporter that accepts a range of tricarboxylic acid-cycle intermediates with 4-5 carbon atoms. There is no interaction with monocarboxylates. This chain is Sodium-dependent high-affinity dicarboxylate transporter 2 (nac-2), found in Caenorhabditis elegans.